The following is a 179-amino-acid chain: DELTA-actitoxin-Afr1e (179 aa).

The segment at 1 to 29 is N-terminal alpha-helix that contributes to the pore; it reads SADVAGAVIDGAGLGFDVLKTVLEALGNV. The interval 11–30 is N-terminal region; it reads GAGLGFDVLKTVLEALGNVK. Position 31 (arginine 31) interacts with an N-(acyl)-sphingosylphosphocholine. Positions 51 and 53 each coordinate N-acetyl-D-glucosamine 6-sulfate. An N-(acyl)-sphingosylphosphocholine is bound by residues arginine 53, serine 54, arginine 79, glycine 85, tyrosine 108, tyrosine 113, serine 114, tryptophan 116, tyrosine 133, tyrosine 137, tyrosine 138, arginine 144, and glycine 168. Residues 105-120 are trp-rich region, which is important for the binding to lipid membrane; that stretch reads SVPYDYNWYSNWWNVR. Tyrosine 138 provides a ligand contact to N-acetyl-D-glucosamine 6-sulfate. The Cell attachment site, crucial for protein stability motif lies at 144–146; that stretch reads RGD.

The protein belongs to the actinoporin family. Sea anemone subfamily. Octamer or nonamer in membranes. Monomer in the soluble state.

The protein resides in the secreted. Its subcellular location is the nematocyst. It localises to the target cell membrane. Its function is as follows. Pore-forming toxin (PFT) that consists of a crown-shaped octamer or nonamer that forms cation-selective hydrophilic pores of about 1.5 nm (inside) and 13 nm (outside) and causes cytolysis. It causes cardiac stimulation. Also causes hemolysis (HC(50)=1.6 nM). Interestingly, the Phe-16 is crucial for hemolysis. Pore formation is a multi-step process that involves specific recognition of membrane sphingomyelin (but neither cholesterol nor phosphatidylcholine) using aromatic rich region and adjacent phosphocholine (POC) binding site, firm binding to the membrane (mainly driven by hydrophobic interactions) accompanied by the transfer of the N-terminal region to the lipid-water interface and finally pore formation after oligomerization of monomers. It is probable that a dimeric form is an assembly intermediate before the complete oligomerization. The formation of stable pores occurs only in vesicles composed of DOPC/SM (there is no oligomerization when the PFT is treated with vesicles of DOPC or SM alone). The transmembrane pore displays 8 lateral perforations, one at each subunit-subunit interface, partially occupied by the acyl-chain region of a bridging lipid. Each pore contains 24 lipid molecules, firmly bound to each subunit, that is, 3 lipids (L1, L2, L3, L4 and/or L5) are associated to each subunit. Lipid L1 bridges 2 subunits, whereas lipids L2 and L3 bind to sites at single subunit. This Actinia fragacea (Strawberry anemone) protein is DELTA-actitoxin-Afr1e.